Here is a 111-residue protein sequence, read N- to C-terminus: uncharacterized protein (111 aa).

Transmembrane regions (helical) follow at residues 4–21, 28–47, 51–73, and 80–102; these read FITA…FVSF, LVYF…YMIY, TGIR…VTAF, and SFFF…YLGM.

The protein localises to the cell membrane. This is an uncharacterized protein from Bacillus subtilis (strain 168).